A 348-amino-acid chain; its full sequence is N-acetyl-gamma-glutamyl-phosphate reductase (348 aa).

Residue C149 is part of the active site.

This sequence belongs to the NAGSA dehydrogenase family. Type 1 subfamily.

Its subcellular location is the cytoplasm. It carries out the reaction N-acetyl-L-glutamate 5-semialdehyde + phosphate + NADP(+) = N-acetyl-L-glutamyl 5-phosphate + NADPH + H(+). Its pathway is amino-acid biosynthesis; L-arginine biosynthesis; N(2)-acetyl-L-ornithine from L-glutamate: step 3/4. Catalyzes the NADPH-dependent reduction of N-acetyl-5-glutamyl phosphate to yield N-acetyl-L-glutamate 5-semialdehyde. This chain is N-acetyl-gamma-glutamyl-phosphate reductase, found in Cellvibrio japonicus (strain Ueda107) (Pseudomonas fluorescens subsp. cellulosa).